The sequence spans 348 residues: Ethanol acetyltransferase 2 (348 aa).

The transit peptide at 1–19 (MIFNSLSIKRLSSTXTSLP) directs the protein to the mitochondrion. An AB hydrolase-1 domain is found at 49–305 (IIFLHGIYGY…VMKERPQEYI (257 aa)). Residues Ser-121, Asp-145, and His-294 each act as charge relay system in the active site.

This sequence belongs to the AB hydrolase superfamily.

The protein resides in the mitochondrion. It catalyses the reaction ethanol + acetyl-CoA = ethyl acetate + CoA. The enzyme catalyses acetyl-CoA + H2O = acetate + CoA + H(+). The catalysed reaction is ethyl acetate + H2O = ethanol + acetate + H(+). Alcohol acetyltransferase that catalyzes the synthesis of ethyl acetate from ethanol and acetyl-CoA. Can also function as a thioesterase by hydrolyzing acetyl-CoA in the absence of ethanol, as well as esterase hydrolyzing ethyl acetate. The chain is Ethanol acetyltransferase 2 (EAT2) from Hanseniaspora uvarum (Yeast).